The chain runs to 462 residues: Chromosomal replication initiator protein DnaA (462 aa).

The tract at residues 1 to 84 (MAVSLWQQCI…RFDIGSRPSA (84 aa)) is domain I, interacts with DnaA modulators. A domain II region spans residues 84–125 (APKPIQATAAVVKPKLESSPQKSQTSFNVNAPEPAATANHRS). The domain III, AAA+ region stretch occupies residues 126 to 342 (NINPTYQFEN…GALNRVIANA (217 aa)). ATP is bound by residues glycine 170, glycine 172, lysine 173, and threonine 174. A domain IV, binds dsDNA region spans residues 343–462 (NFTGRPITID…YANLIRTLSS (120 aa)).

The protein belongs to the DnaA family. As to quaternary structure, oligomerizes as a right-handed, spiral filament on DNA at oriC.

The protein localises to the cytoplasm. In terms of biological role, plays an essential role in the initiation and regulation of chromosomal replication. ATP-DnaA binds to the origin of replication (oriC) to initiate formation of the DNA replication initiation complex once per cell cycle. Binds the DnaA box (a 9 base pair repeat at the origin) and separates the double-stranded (ds)DNA. Forms a right-handed helical filament on oriC DNA; dsDNA binds to the exterior of the filament while single-stranded (ss)DNA is stabiized in the filament's interior. The ATP-DnaA-oriC complex binds and stabilizes one strand of the AT-rich DNA unwinding element (DUE), permitting loading of DNA polymerase. After initiation quickly degrades to an ADP-DnaA complex that is not apt for DNA replication. Binds acidic phospholipids. This Shewanella woodyi (strain ATCC 51908 / MS32) protein is Chromosomal replication initiator protein DnaA.